The sequence spans 358 residues: 3-O-methylredipecamine 2-O-methyltransferase IpeOMT3 (358 aa).

S-adenosyl-L-methionine-binding residues include G193, D216, D236, M237, and K250. H254 serves as the catalytic Proton acceptor.

It belongs to the class I-like SAM-binding methyltransferase superfamily. Cation-independent O-methyltransferase family. As to expression, expressed in roots.

It localises to the cytoplasm. The protein resides in the cytosol. It carries out the reaction (S)-reticuline + S-adenosyl-L-methionine = (S)-laudanine + S-adenosyl-L-homocysteine + H(+). The protein operates within alkaloid biosynthesis. O-methyltransferase involved in the biosynthesis of ipecac and benzylisoquinoline monoterpenoid-isoquinoline alkaloids natural products, starting by the condensation of dopamine and secologanin, and including emetine and cephaeline, drugs used both as anti-protozoal (e.g. treatment of ameobiasis) and as emetic agents. Catalyzes 2-O-methylation of 3-O-methylredipecamine and, with less efficiency, the 7-O-methylation of (S)-coclaurine, (R,S)-N-methylcoclaurine, (R,S)-4'-O-methylcoclaurine, (R,S)-6-O-methyllaudanosoline, nororientaline, (S)-norreticuline and (S)-reticuline. In Carapichea ipecacuanha (Ipecac), this protein is 3-O-methylredipecamine 2-O-methyltransferase IpeOMT3.